Reading from the N-terminus, the 667-residue chain is Beta-galactosidase LacA (667 aa).

Substrate is bound at residue R109. Zn(2+) is bound at residue C113. Substrate is bound at residue N147. The active-site Proton donor is the E148. Residues C153, C155, and C158 each coordinate Zn(2+). E307 (nucleophile) is an active-site residue. Substrate-binding positions include W315 and 355 to 358; that span reads EKFH.

This sequence belongs to the glycosyl hydrolase 42 family.

The enzyme catalyses Hydrolysis of terminal non-reducing beta-D-galactose residues in beta-D-galactosides.. Hydrolyzes lactose, oNP-galactoside (oNPG), pNP-galactosidase (pNPG), pNP-mannoside, pNP-glucoside, pNP-fucoside, pNP-N-acetylglucosamide, but not pNP-arabinoside or 4-methylumbelliferyl-beta-galactopyranoside (MUG). Transgalactosylates lactose at 10 g/L, but not at 270 g/L. This Lactobacillus acidophilus protein is Beta-galactosidase LacA.